The sequence spans 420 residues: Tyrosine--tRNA ligase (420 aa).

Y33 serves as a coordination point for L-tyrosine. A 'HIGH' region motif is present at residues 38–47 (PTADSLHIGH). Y168 and Q172 together coordinate L-tyrosine. Positions 231–235 (KFGKT) match the 'KMSKS' region motif. K234 contacts ATP. The S4 RNA-binding domain maps to 353-419 (MLLVDALIKV…GKKNYYLVKL (67 aa)).

The protein belongs to the class-I aminoacyl-tRNA synthetase family. TyrS type 1 subfamily. Homodimer.

It is found in the cytoplasm. The catalysed reaction is tRNA(Tyr) + L-tyrosine + ATP = L-tyrosyl-tRNA(Tyr) + AMP + diphosphate + H(+). In terms of biological role, catalyzes the attachment of tyrosine to tRNA(Tyr) in a two-step reaction: tyrosine is first activated by ATP to form Tyr-AMP and then transferred to the acceptor end of tRNA(Tyr). In Desulfitobacterium hafniense (strain Y51), this protein is Tyrosine--tRNA ligase.